A 98-amino-acid chain; its full sequence is NADH-ubiquinone oxidoreductase chain 4L (98 aa).

The next 3 membrane-spanning stretches (helical) occupy residues 1 to 21 (MSSY…GILL), 24 to 44 (LHLL…FIWI), and 61 to 81 (LILL…MVAL).

The protein belongs to the complex I subunit 4L family.

The protein localises to the mitochondrion membrane. The enzyme catalyses a ubiquinone + NADH + 5 H(+)(in) = a ubiquinol + NAD(+) + 4 H(+)(out). Functionally, core subunit of the mitochondrial membrane respiratory chain NADH dehydrogenase (Complex I) that is believed to belong to the minimal assembly required for catalysis. Complex I functions in the transfer of electrons from NADH to the respiratory chain. The immediate electron acceptor for the enzyme is believed to be ubiquinone. The sequence is that of NADH-ubiquinone oxidoreductase chain 4L (ND4L) from Pisaster ochraceus (Ochre sea star).